We begin with the raw amino-acid sequence, 56 residues long: Large ribosomal subunit protein eL40 (56 aa).

It belongs to the eukaryotic ribosomal protein eL40 family.

The polypeptide is Large ribosomal subunit protein eL40 (Sulfurisphaera tokodaii (strain DSM 16993 / JCM 10545 / NBRC 100140 / 7) (Sulfolobus tokodaii)).